The following is a 121-amino-acid chain: Small ribosomal subunit protein bS6 (121 aa).

It belongs to the bacterial ribosomal protein bS6 family.

Binds together with bS18 to 16S ribosomal RNA. In Pelagibacter ubique (strain HTCC1062), this protein is Small ribosomal subunit protein bS6.